The primary structure comprises 247 residues: tRNA1(Val) (adenine(37)-N6)-methyltransferase (247 aa).

This sequence belongs to the methyltransferase superfamily. tRNA (adenine-N(6)-)-methyltransferase family.

It localises to the cytoplasm. It catalyses the reaction adenosine(37) in tRNA1(Val) + S-adenosyl-L-methionine = N(6)-methyladenosine(37) in tRNA1(Val) + S-adenosyl-L-homocysteine + H(+). Specifically methylates the adenine in position 37 of tRNA(1)(Val) (anticodon cmo5UAC). The sequence is that of tRNA1(Val) (adenine(37)-N6)-methyltransferase from Edwardsiella ictaluri (strain 93-146).